The sequence spans 303 residues: Porphobilinogen deaminase (303 aa).

Position 241 is an S-(dipyrrolylmethanemethyl)cysteine (C241).

The protein belongs to the HMBS family. In terms of assembly, monomer. It depends on dipyrromethane as a cofactor.

The enzyme catalyses 4 porphobilinogen + H2O = hydroxymethylbilane + 4 NH4(+). The protein operates within porphyrin-containing compound metabolism; protoporphyrin-IX biosynthesis; coproporphyrinogen-III from 5-aminolevulinate: step 2/4. Its pathway is porphyrin-containing compound metabolism; chlorophyll biosynthesis. In terms of biological role, tetrapolymerization of the monopyrrole PBG into the hydroxymethylbilane pre-uroporphyrinogen in several discrete steps. The chain is Porphobilinogen deaminase from Roseiflexus sp. (strain RS-1).